The sequence spans 208 residues: Uracil phosphoribosyltransferase (208 aa).

Residues Arg-78, Arg-103, and 130-138 contribute to the 5-phospho-alpha-D-ribose 1-diphosphate site; that span reads DPMLATGGS. Residues Ile-193 and 198-200 each bind uracil; that span reads GDA. Asp-199 is a 5-phospho-alpha-D-ribose 1-diphosphate binding site.

The protein belongs to the UPRTase family. Mg(2+) serves as cofactor.

The catalysed reaction is UMP + diphosphate = 5-phospho-alpha-D-ribose 1-diphosphate + uracil. It participates in pyrimidine metabolism; UMP biosynthesis via salvage pathway; UMP from uracil: step 1/1. Its activity is regulated as follows. Allosterically activated by GTP. Catalyzes the conversion of uracil and 5-phospho-alpha-D-ribose 1-diphosphate (PRPP) to UMP and diphosphate. The sequence is that of Uracil phosphoribosyltransferase from Aliivibrio fischeri (strain MJ11) (Vibrio fischeri).